A 601-amino-acid chain; its full sequence is Elongation factor 4 (601 aa).

One can recognise a tr-type G domain in the interval 4–186; the sequence is SFIRNFAIIA…SIVHLVPPPK (183 aa). GTP contacts are provided by residues 16 to 21 and 133 to 136; these read DHGKST and NKID.

This sequence belongs to the TRAFAC class translation factor GTPase superfamily. Classic translation factor GTPase family. LepA subfamily.

Its subcellular location is the cell inner membrane. It carries out the reaction GTP + H2O = GDP + phosphate + H(+). Functionally, required for accurate and efficient protein synthesis under certain stress conditions. May act as a fidelity factor of the translation reaction, by catalyzing a one-codon backward translocation of tRNAs on improperly translocated ribosomes. Back-translocation proceeds from a post-translocation (POST) complex to a pre-translocation (PRE) complex, thus giving elongation factor G a second chance to translocate the tRNAs correctly. Binds to ribosomes in a GTP-dependent manner. The protein is Elongation factor 4 of Koribacter versatilis (strain Ellin345).